The chain runs to 412 residues: MRYADPSANRDLLGNRTLLFIFICAFALVTLLQQILYSKSYIKRGFQFGWQRGDQQANWTGLFNDSDSPTEQNITGSSSRYFEFYKEPLEFNSTRCLELRQEILEVKVLSMVKQSELFERWKSLQICKWAMDTAEASLFKSTLSRCCNAPSFLFTTQKNTPVETNLRYEVESSGLYHIDQEIFKMFPKEMPYYRSQFKKCAVVGNGGILKNSGCGKEINSADFVFRCNLPPISGIYTTDVGEKTDVVTVNPSIIIDRFHKLEKWRRPFFSVLQRYENASVLLPAFYNVRNTLVSFRVKYMLDDFQSRQPVYFFHPQYLSSVSRYWLSLGVRARRISTGLILVTAALELCEEVHLFGFWAFPMNPSGFFITHHYYDNVKPKPGFHAMPSEIFTFLRMHSRGILRVHTGTCNCC.

At 1–16 (MRYADPSANRDLLGNR) the chain is on the cytoplasmic side. The chain crosses the membrane as a helical; Signal-anchor for type II membrane protein span at residues 17 to 37 (TLLFIFICAFALVTLLQQILY). Topologically, residues 38–412 (SKSYIKRGFQ…RVHTGTCNCC (375 aa)) are lumenal. 4 N-linked (GlcNAc...) asparagine glycosylation sites follow: Asn58, Asn64, Asn73, and Asn92. Intrachain disulfides connect Cys200/Cys349 and Cys214/Cys409. Residues Asn228 and 250–252 (NPS) each bind substrate. Asn277 carries an N-linked (GlcNAc...) asparagine glycan. 336 to 338 (STG) is a binding site for substrate. Residue His384 is the Proton donor/acceptor of the active site.

This sequence belongs to the glycosyltransferase 29 family. As to expression, highly expressed in brain. Expressed at low levels in other tissues, including liver, testis, lung, placenta and spleen.

The protein resides in the golgi apparatus membrane. The catalysed reaction is a ganglioside GT1b (d18:1(4E)) + CMP-N-acetyl-beta-neuraminate = a ganglioside GQ1b (d18:1(4E)) + CMP + H(+). The enzyme catalyses a ganglioside GD3 (d18:1(4E)) + CMP-N-acetyl-beta-neuraminate = a ganglioside GT3 (d18:1(4E)) + CMP + H(+). It catalyses the reaction a ganglioside GD1a (d18:1(4E)) + CMP-N-acetyl-beta-neuraminate = a ganglioside GT1a (d18:1(4E)) + CMP + H(+). It carries out the reaction a ganglioside GM1b (d18:1(4E)) + CMP-N-acetyl-beta-neuraminate = a ganglioside GD1c (d18:1(4E)) + CMP + H(+). The catalysed reaction is a ganglioside GQ1c (d18:1(4E)) + CMP-N-acetyl-beta-neuraminate = a ganglioside GP1c (d18:1(4E)) + CMP + H(+). Its pathway is protein modification; protein glycosylation. Functionally, involved in the synthesis of gangliosides GD1c, GT1a, GQ1b, GP1c and GT3 from GD1a, GT1b, GM1b and GD3 respectively. The polypeptide is Alpha-2,8-sialyltransferase 8E (Mus musculus (Mouse)).